The sequence spans 631 residues: Replication protein E1 (631 aa).

Residues 28-48 are disordered; the sequence is TGDIISEDETEEDEGTASDLD. Positions 32 to 43 are enriched in acidic residues; that stretch reads ISEDETEEDEGT. Residues 86–88 carry the Nuclear localization signal motif; the sequence is KRK. At serine 92 the chain carries Phosphoserine; by host. The tract at residues 168–334 is DNA-binding region; the sequence is IGATPPQQIQ…QTQIQHSFQD (167 aa). In terms of domain architecture, SF3 helicase spans 433 to 583; that stretch reads VDFISFLSYF…FPIDTNGNPV (151 aa). 459–466 contributes to the ATP binding site; sequence GPPNTGKS. Residue lysine 540 forms a Glycyl lysine isopeptide (Lys-Gly) (interchain with G-Cter in SUMO) linkage.

Belongs to the papillomaviridae E1 protein family. As to quaternary structure, can form hexamers. Interacts with E2 protein; this interaction increases E1 DNA binding specificity. Interacts with host DNA polymerase subunit POLA2. Interacts with host single stranded DNA-binding protein RPA1. Interacts with host TOP1; this interaction stimulates the enzymatic activity of TOP1. Phosphorylated. Post-translationally, sumoylated.

It localises to the host nucleus. It catalyses the reaction Couples ATP hydrolysis with the unwinding of duplex DNA by translocating in the 3'-5' direction.. It carries out the reaction ATP + H2O = ADP + phosphate + H(+). Functionally, ATP-dependent DNA 3'-5' helicase required for initiation of viral DNA replication. It forms a complex with the viral E2 protein. The E1-E2 complex binds to the replication origin which contains binding sites for both proteins. During the initial step, a dimer of E1 interacts with a dimer of protein E2 leading to a complex that binds the viral origin of replication with high specificity. Then, a second dimer of E1 displaces the E2 dimer in an ATP-dependent manner to form the E1 tetramer. Following this, two E1 monomers are added to each half of the site, which results in the formation of two E1 trimers on the viral ori. Subsequently, two hexamers will be created. The double hexamer acts as a bi-directional helicase machinery and unwinds the viral DNA and then recruits the host DNA polymerase to start replication. The protein is Replication protein E1 of Homo sapiens (Human).